The chain runs to 110 residues: UPF0060 membrane protein SACE_5620 (110 aa).

4 helical membrane-spanning segments follow: residues V8 to G28, G34 to F54, I63 to D83, and R89 to P109.

This sequence belongs to the UPF0060 family.

The protein localises to the cell membrane. This chain is UPF0060 membrane protein SACE_5620, found in Saccharopolyspora erythraea (strain ATCC 11635 / DSM 40517 / JCM 4748 / NBRC 13426 / NCIMB 8594 / NRRL 2338).